We begin with the raw amino-acid sequence, 165 residues long: Plastocyanin, chloroplastic (165 aa).

The transit peptide at 1–66 directs the protein to the chloroplast; that stretch reads MATVTSSAAV…AGILAGNAMA (66 aa). One can recognise a Plastocyanin-like domain in the interval 67–165; it reads AEVLLGSSDG…AGMVGKVTVN (99 aa). His103, Cys150, His153, and Met158 together coordinate Cu cation.

This sequence belongs to the plastocyanin family. Cu(2+) is required as a cofactor.

The protein resides in the plastid. Its subcellular location is the chloroplast thylakoid membrane. Participates in electron transfer between P700 and the cytochrome b6-f complex in photosystem I. This is Plastocyanin, chloroplastic (PETE) from Silene latifolia subsp. alba (White campion).